The following is a 170-amino-acid chain: Adenine phosphoribosyltransferase (170 aa).

The protein belongs to the purine/pyrimidine phosphoribosyltransferase family. In terms of assembly, homodimer.

The protein resides in the cytoplasm. The enzyme catalyses AMP + diphosphate = 5-phospho-alpha-D-ribose 1-diphosphate + adenine. Its pathway is purine metabolism; AMP biosynthesis via salvage pathway; AMP from adenine: step 1/1. In terms of biological role, catalyzes a salvage reaction resulting in the formation of AMP, that is energically less costly than de novo synthesis. The chain is Adenine phosphoribosyltransferase from Cenarchaeum symbiosum (strain A).